The primary structure comprises 716 residues: Polyribonucleotide nucleotidyltransferase (716 aa).

The Mg(2+) site is built by Asp485 and Asp491. Residues 552-611 (PRFTTIKIDQDKIKDVIGKGGAVIRELTESTNTNIEIGDDGTIKVAASDQADADAAIEKI) form the KH domain. An S1 motif domain is found at 621–689 (GKIYQGKVAR…RQGRVRLSMK (69 aa)). The segment covering 689 to 698 (KEAAEKKEEP) has biased composition (basic and acidic residues). The segment at 689–716 (KEAAEKKEEPAPEAPAEPAAEEENKSEE) is disordered. Residues 707–716 (AAEEENKSEE) show a composition bias toward acidic residues.

This sequence belongs to the polyribonucleotide nucleotidyltransferase family. As to quaternary structure, component of the RNA degradosome, which is a multiprotein complex involved in RNA processing and mRNA degradation. Requires Mg(2+) as cofactor.

Its subcellular location is the cytoplasm. The enzyme catalyses RNA(n+1) + phosphate = RNA(n) + a ribonucleoside 5'-diphosphate. Involved in mRNA degradation. Catalyzes the phosphorolysis of single-stranded polyribonucleotides processively in the 3'- to 5'-direction. The protein is Polyribonucleotide nucleotidyltransferase of Idiomarina loihiensis (strain ATCC BAA-735 / DSM 15497 / L2-TR).